The chain runs to 324 residues: Quinolinate synthase (324 aa).

Residues histidine 39 and serine 56 each coordinate iminosuccinate. Residue cysteine 101 participates in [4Fe-4S] cluster binding. Iminosuccinate is bound by residues 127-129 (YIN) and serine 144. Residue cysteine 187 participates in [4Fe-4S] cluster binding. Iminosuccinate contacts are provided by residues 213–215 (HPE) and threonine 230. Cysteine 280 lines the [4Fe-4S] cluster pocket.

It belongs to the quinolinate synthase family. Type 2 subfamily. [4Fe-4S] cluster serves as cofactor.

Its subcellular location is the cytoplasm. The catalysed reaction is iminosuccinate + dihydroxyacetone phosphate = quinolinate + phosphate + 2 H2O + H(+). It functions in the pathway cofactor biosynthesis; NAD(+) biosynthesis; quinolinate from iminoaspartate: step 1/1. Catalyzes the condensation of iminoaspartate with dihydroxyacetone phosphate to form quinolinate. This chain is Quinolinate synthase, found in Nostoc punctiforme (strain ATCC 29133 / PCC 73102).